The chain runs to 455 residues: Beta-1,3-galactosyl-O-glycosyl-glycoprotein beta-1,6-N-acetylglucosaminyltransferase 4 (455 aa).

Topologically, residues 1–13 are cytoplasmic; it reads MKIFRCCFKYTLQ. Residues 14–34 form a helical; Signal-anchor for type II membrane protein membrane-spanning segment; the sequence is QKLFILLLTLWLFSLLKLLNV. At 35–455 the chain is on the lumenal side; the sequence is GRLLFPQRDI…TEGTRQSHTL (421 aa). A glycan (N-linked (GlcNAc...) asparagine) is linked at Asn-73. 4 cysteine pairs are disulfide-bonded: Cys-74–Cys-228, Cys-162–Cys-383, Cys-183–Cys-210, and Cys-392–Cys-424. N-linked (GlcNAc...) asparagine glycosylation is found at Asn-287 and Asn-382.

It belongs to the glycosyltransferase 14 family.

It is found in the golgi apparatus membrane. It carries out the reaction a 3-O-[beta-D-galactosyl-(1-&gt;3)-N-acetyl-alpha-D-galactosaminyl]-L-seryl-[protein] + UDP-N-acetyl-alpha-D-glucosamine = 3-O-{beta-D-galactosyl-(1-&gt;3)-[N-acetyl-beta-D-glucosaminyl-(1-&gt;6)]-N-acetyl-alpha-D-galactosaminyl}-L-seryl-[protein] + UDP + H(+). The enzyme catalyses a 3-O-[beta-D-galactosyl-(1-&gt;3)-N-acetyl-alpha-D-galactosaminyl]-L-threonyl-[protein] + UDP-N-acetyl-alpha-D-glucosamine = a 3-O-{beta-D-galactosyl-(1-&gt;3)-[N-acetyl-beta-D-glucosaminyl-(1-&gt;6)]-N-acetyl-alpha-D-galactosaminyl}-L-threonyl-[protein] + UDP + H(+). It functions in the pathway protein modification; protein glycosylation. Its function is as follows. Glycosyltransferase that mediates core 2 O-glycan branching, an important step in mucin-type biosynthesis. Does not have core 4 O-glycan or I-branching enzyme activity. The polypeptide is Beta-1,3-galactosyl-O-glycosyl-glycoprotein beta-1,6-N-acetylglucosaminyltransferase 4 (Gcnt4) (Mus musculus (Mouse)).